The chain runs to 456 residues: UDP-N-acetylglucosamine 1-carboxyvinyltransferase (456 aa).

Phosphoenolpyruvate is bound at residue 34 to 35 (KN). Arg104 contributes to the UDP-N-acetyl-alpha-D-glucosamine binding site. The active-site Proton donor is Cys128. Cys128 is subject to 2-(S-cysteinyl)pyruvic acid O-phosphothioketal. 2 residues coordinate UDP-N-acetyl-alpha-D-glucosamine: Asp319 and Ile341.

This sequence belongs to the EPSP synthase family. MurA subfamily.

It localises to the cytoplasm. It catalyses the reaction phosphoenolpyruvate + UDP-N-acetyl-alpha-D-glucosamine = UDP-N-acetyl-3-O-(1-carboxyvinyl)-alpha-D-glucosamine + phosphate. It participates in cell wall biogenesis; peptidoglycan biosynthesis. Cell wall formation. Adds enolpyruvyl to UDP-N-acetylglucosamine. This chain is UDP-N-acetylglucosamine 1-carboxyvinyltransferase, found in Prochlorococcus marinus (strain MIT 9312).